We begin with the raw amino-acid sequence, 505 residues long: Cytochrome P450 monooxygenase efuB (505 aa).

The helical transmembrane segment at 12–34 (GFWPTVAGTVATYLFYQIVATVY) threads the bilayer. Cys450 lines the heme pocket.

It belongs to the cytochrome P450 family. Requires heme as cofactor.

The protein resides in the membrane. Its pathway is secondary metabolite biosynthesis; terpenoid biosynthesis. Functionally, cytochrome P450 monooxygenase; part of the gene cluster that mediates the biosynthesis of enfumafungin, a glycosylated fernene-type triterpenoid with potent antifungal activity, mediated by its interaction with beta-1,3-glucan synthase and the fungal cell wall. The pathway begins with the terpene cyclase-glycosyl transferase fusion protein that most likely uses 2,3-oxidosqualene as substrate and catalyzes glycosylation immediately after cyclization. The fernene glycoside then could be processed by the desaturase efuI which catalyzes isomerization of a double bond established by efuA to form the core structure. The latter would then undergo a series of hydroxylations in unknown order at C-2, C-19, C-23 and C-25, which would be catalyzed by two of the three cytochrome P450 monooxygenases efuB, efuG or efuH. The hydroxy-group at C-25 becomes oxidized by the dehydrogenase efuE to enable a spontaneous, non-enzymatic hemiacetal formation with C-23. After hydroxylation at C-2, acetylation by the acetyltransferase efuC takes place. The final steps in enfumafungin biosynthesis require expansion of the 5-membered ring by lactonization via a Baeyer-Villiger reaction mediated by one of the BGC's cytochrome P450 monooxygenases (efuB, efuG or efuH) followed by ring cleavage. This type of reaction would establish a double bond between C-20 and C-21 which could be reduced by the reductase efuL to form the final product. The protein is Cytochrome P450 monooxygenase efuB of Hormonema carpetanum.